The chain runs to 338 residues: Glyceraldehyde-3-phosphate dehydrogenase, cytosolic (338 aa).

NAD(+)-binding positions include 14–15 (RI), D36, and R83. D-glyceraldehyde 3-phosphate contacts are provided by residues 154–156 (SCT), T185, 214–215 (TG), and R237. C155 functions as the Nucleophile in the catalytic mechanism. N319 provides a ligand contact to NAD(+).

Belongs to the glyceraldehyde-3-phosphate dehydrogenase family. In terms of assembly, homotetramer.

It localises to the cytoplasm. It catalyses the reaction D-glyceraldehyde 3-phosphate + phosphate + NAD(+) = (2R)-3-phospho-glyceroyl phosphate + NADH + H(+). It functions in the pathway carbohydrate degradation; glycolysis; pyruvate from D-glyceraldehyde 3-phosphate: step 1/5. Functionally, key enzyme in glycolysis that catalyzes the first step of the pathway by converting D-glyceraldehyde 3-phosphate (G3P) into 3-phospho-D-glyceroyl phosphate. Essential for the maintenance of cellular ATP levels and carbohydrate metabolism. The chain is Glyceraldehyde-3-phosphate dehydrogenase, cytosolic (GAPC) from Ranunculus acris (Meadow buttercup).